Here is a 191-residue protein sequence, read N- to C-terminus: MRISKISRKTKETDIQLEINLDGKGTADVSTGIGFFDHMLSSFARHAEFDLKVRAEGDLYVDEHHLIEDTGIVLGKALAEALGDMAGIARFGEARIPMDEALAEVALDVGGRSYLVMKADFIAPQVGQFSTQLVKHFFETVASNAKITIHASVYGDNDHHKIEALFKAFAYAMKRAVKIEGKEVKSTKGTL.

It belongs to the imidazoleglycerol-phosphate dehydratase family.

Its subcellular location is the cytoplasm. It catalyses the reaction D-erythro-1-(imidazol-4-yl)glycerol 3-phosphate = 3-(imidazol-4-yl)-2-oxopropyl phosphate + H2O. The protein operates within amino-acid biosynthesis; L-histidine biosynthesis; L-histidine from 5-phospho-alpha-D-ribose 1-diphosphate: step 6/9. The polypeptide is Imidazoleglycerol-phosphate dehydratase (Methanosarcina mazei (strain ATCC BAA-159 / DSM 3647 / Goe1 / Go1 / JCM 11833 / OCM 88) (Methanosarcina frisia)).